The sequence spans 589 residues: Guanylate-binding protein 1 (589 aa).

The tract at residues 1–309 is GTPase domain (Globular); sequence MASEIHMSEP…SAICSGELPC (309 aa). One can recognise a GB1/RHD3-type G domain in the interval 35–276; the sequence is TQPVVVVAIV…FTSYIFSYSG (242 aa). GTP contacts are provided by residues 47–53, 67–69, and 97–101; these read YRTGKSY, LGS, and DTEGL. Ser156 is modified (phosphoserine). Cys586 carries the post-translational modification Cysteine methyl ester. Cys586 carries the S-farnesyl cysteine lipid modification. Cys586 carries the S-geranylgeranyl cysteine; partial lipid modification. Phosphothreonine is present on Thr587. Residues 587-589 constitute a propeptide, removed in mature form; it reads TIL.

Belongs to the TRAFAC class dynamin-like GTPase superfamily. GB1/RHD3 GTPase family. GB1 subfamily. As to quaternary structure, homodimer; homodimerization occurs upon GTP-binding and is required for the second hydrolysis step from GDP to GMP. Undergoes conformational changes and oligomerization upon GTP-binding and hydrolysis. Heterodimer with other family members, including GBP2, GBP3, GBP4 and GBP5. Dimerization regulates subcellular location to membranous structures. Interacts with SQSTM1. Interacts (when phosphorylated) with 14-3-3 protein sigma (SFN); leading to GBP1 retention in the cytosol and inactivation. Isoprenylation of mouse GBP1 is incomplete. It persistently exists in the cell as a mixture of C20-modified and (more predominantly) unmodified form. Isoprenylation is required for proper subcellular location. Post-translationally, phosphorylated at Ser-156 by PIM1 in absence of infection, inhibits GBP1: phosphorylation promotes interaction with 14-3-3 protein sigma (SFN), leading to GBP1 retention in the cytosol. Dephosphorylated in response to infection, liberating GBP1.

The protein resides in the cytoplasmic vesicle membrane. It localises to the golgi apparatus membrane. The protein localises to the cell membrane. It is found in the cytoplasm. Its subcellular location is the cytosol. The protein resides in the secreted. The enzyme catalyses GTP + H2O = GDP + phosphate + H(+). The catalysed reaction is GDP + H2O = GMP + phosphate + H(+). Interferon (IFN)-inducible GTPase that plays important roles in innate immunity against a diverse range of bacterial, viral and protozoan pathogens. Hydrolyzes GTP to GMP in two consecutive cleavage reactions: GTP is first hydrolyzed to GDP and then to GMP in a processive manner. Following infection, recruited to the pathogen-containing vacuoles or vacuole-escaped bacteria and promotes both inflammasome assembly and autophagy. Acts as a positive regulator of inflammasome assembly by facilitating the detection of inflammasome ligands from pathogens. Involved in the lysis of pathogen-containing vacuoles, releasing pathogens into the cytosol. Following pathogen release in the cytosol, forms a protein coat in a GTPase-dependent manner that encapsulates pathogens and promotes the detection of ligands by pattern recognition receptors. Plays a key role in inflammasome assembly in response to infection by Gram-negative bacteria: following pathogen release in the cytosol, forms a protein coat that encapsulates Gram-negative bacteria and directly binds to lipopolysaccharide (LPS), disrupting the O-antigen barrier and unmasking lipid A that is that detected by the non-canonical inflammasome effector CASP4/CASP11. Also promotes recruitment of proteins that mediate bacterial cytolysis, leading to release double-stranded DNA (dsDNA) that activates the AIM2 inflammasome. Involved in autophagy by regulating bacteriolytic peptide generation via its interaction with ubiquitin-binding protein SQSTM1, which delivers monoubiquitinated proteins to autolysosomes for the generation of bacteriolytic peptides. Confers protection to several pathogens, including the bacterial pathogens L.monocytogenes and M.bovis BCG as well as the protozoan pathogen T.gondii. Exhibits antiviral activity against influenza virus. This is Guanylate-binding protein 1 (Gbp1) from Mus musculus (Mouse).